An 87-amino-acid polypeptide reads, in one-letter code: Retinal rod rhodopsin-sensitive cGMP 3',5'-cyclic phosphodiesterase subunit gamma (87 aa).

Residue Met1 is modified to N-acetylmethionine. A compositionally biased stretch (basic and acidic residues) spans 1–12 (MNLEPPKAEIRS). The interval 1-55 (MNLEPPKAEIRSATRVMGGPVTPRKGPPKFKQRQTRQFKSKPPKKGVQGFGDDIP) is disordered. Over residues 26 to 44 (GPPKFKQRQTRQFKSKPPK) the composition is skewed to basic residues.

This sequence belongs to the rod/cone cGMP-PDE gamma subunit family. In terms of assembly, oligomer composed of two catalytic chains (alpha and beta), an inhibitory chain (gamma) and the delta chain.

It carries out the reaction 3',5'-cyclic GMP + H2O = GMP + H(+). Participates in processes of transmission and amplification of the visual signal. cGMP-PDEs are the effector molecules in G-protein-mediated phototransduction in vertebrate rods and cones. The sequence is that of Retinal rod rhodopsin-sensitive cGMP 3',5'-cyclic phosphodiesterase subunit gamma (PDE6G) from Bos taurus (Bovine).